We begin with the raw amino-acid sequence, 299 residues long: ATP phosphoribosyltransferase (299 aa).

This sequence belongs to the ATP phosphoribosyltransferase family. Long subfamily. It depends on Mg(2+) as a cofactor.

It localises to the cytoplasm. It carries out the reaction 1-(5-phospho-beta-D-ribosyl)-ATP + diphosphate = 5-phospho-alpha-D-ribose 1-diphosphate + ATP. Its pathway is amino-acid biosynthesis; L-histidine biosynthesis; L-histidine from 5-phospho-alpha-D-ribose 1-diphosphate: step 1/9. With respect to regulation, feedback inhibited by histidine. Functionally, catalyzes the condensation of ATP and 5-phosphoribose 1-diphosphate to form N'-(5'-phosphoribosyl)-ATP (PR-ATP). Has a crucial role in the pathway because the rate of histidine biosynthesis seems to be controlled primarily by regulation of HisG enzymatic activity. The polypeptide is ATP phosphoribosyltransferase (Shewanella halifaxensis (strain HAW-EB4)).